A 284-amino-acid polypeptide reads, in one-letter code: Serine/threonine-protein phosphatase Pgam5, mitochondrial (284 aa).

Residues 8–24 form a helical membrane-spanning segment; the sequence is LGVPTATLAVGTLLLGD.

Belongs to the phosphoglycerate mutase family. BPG-dependent PGAM subfamily. As to quaternary structure, interacts with skn-1 isoforms a and c.

It is found in the mitochondrion outer membrane. The enzyme catalyses O-phospho-L-seryl-[protein] + H2O = L-seryl-[protein] + phosphate. It carries out the reaction O-phospho-L-threonyl-[protein] + H2O = L-threonyl-[protein] + phosphate. Displays phosphatase activity for serine/threonine residues. Has apparently no phosphoglycerate mutase activity. The polypeptide is Serine/threonine-protein phosphatase Pgam5, mitochondrial (pgam-5) (Caenorhabditis elegans).